A 161-amino-acid chain; its full sequence is Succinate dehydrogenase assembly factor 2, mitochondrial (161 aa).

The transit peptide at 1–31 (MSLLRVTRSSGHLSAVCRLPARSISTTSILL) directs the protein to the mitochondrion.

Belongs to the SDHAF2 family. In terms of assembly, interacts with the flavoprotein subunit within the SDH catalytic dimer.

It is found in the mitochondrion matrix. In terms of biological role, plays an essential role in the assembly of succinate dehydrogenase (SDH), an enzyme complex (also referred to as respiratory complex II) that is a component of both the tricarboxylic acid (TCA) cycle and the mitochondrial electron transport chain, and which couples the oxidation of succinate to fumarate with the reduction of ubiquinone (coenzyme Q) to ubiquinol. Required for flavinylation (covalent attachment of FAD) of the flavoprotein subunit of the SDH catalytic dimer. The chain is Succinate dehydrogenase assembly factor 2, mitochondrial from Aedes aegypti (Yellowfever mosquito).